Reading from the N-terminus, the 347-residue chain is MNPLAQPIIYSTIFAGTLITALSSHWFFAWVGLEMNMLAFIPVLTKKMNPRSTEAAIKYFLTQATASMILLMAILSNNMLSGQWTTTNATNQYSSLMIVVAMAMKLGMAPFHFWVPEVTQGTPLMSGLLLLTWQKLAPMSIMYQISSSTNVSLLLTLSILSILAGSWGGLNQTQLRKILAYSSITHVGWMMAVLPYNPNMTILNLTIYIILTTTTFLLLNLSSSTTTLLLSRTWNKLTWLTPLIPSTLLSLGGLPPLTGFLPKWLIIEEFTKNNDLITPTIMAIITLLNLYFYLRLIYSTSITLLPMSNNVKMKWQLEYTKPTPFLPTLITLTTLLLPISPFMLMVL.

The next 10 helical transmembrane spans lie at 13 to 33 (IFAGTLITALSSHWFFAWVGL), 55 to 75 (AAIKYFLTQATASMILLMAIL), 96 to 116 (LMIVVAMAMKLGMAPFHFWVP), 123 to 143 (PLMSGLLLLTWQKLAPMSIMY), 150 to 170 (NVSLLLTLSILSILAGSWGGL), 178 to 198 (ILAYSSITHVGWMMAVLPYNP), 201 to 221 (TILNLTIYIILTTTTFLLLNL), 247 to 267 (TLLSLGGLPPLTGFLPKWLII), 277 to 297 (ITPTIMAIITLLNLYFYLRLI), and 325 to 345 (FLPTLITLTTLLLPISPFMLM).

It belongs to the complex I subunit 2 family. As to quaternary structure, core subunit of respiratory chain NADH dehydrogenase (Complex I) which is composed of 45 different subunits. Interacts with TMEM242.

The protein resides in the mitochondrion inner membrane. The catalysed reaction is a ubiquinone + NADH + 5 H(+)(in) = a ubiquinol + NAD(+) + 4 H(+)(out). Its function is as follows. Core subunit of the mitochondrial membrane respiratory chain NADH dehydrogenase (Complex I) which catalyzes electron transfer from NADH through the respiratory chain, using ubiquinone as an electron acceptor. Essential for the catalytic activity and assembly of complex I. The sequence is that of NADH-ubiquinone oxidoreductase chain 2 from Gorilla gorilla gorilla (Western lowland gorilla).